The primary structure comprises 188 residues: dCTP deaminase (188 aa).

DCTP-binding positions include 111–116 (KSTYAR), 135–137 (TLE), Gln-156, Tyr-170, and Gln-180. Glu-137 functions as the Proton donor/acceptor in the catalytic mechanism.

The protein belongs to the dCTP deaminase family. In terms of assembly, homotrimer.

The catalysed reaction is dCTP + H2O + H(+) = dUTP + NH4(+). It participates in pyrimidine metabolism; dUMP biosynthesis; dUMP from dCTP (dUTP route): step 1/2. In terms of biological role, catalyzes the deamination of dCTP to dUTP. The sequence is that of dCTP deaminase from Pseudomonas fluorescens (strain SBW25).